Consider the following 116-residue polypeptide: Peptidyl-tRNA hydrolase (116 aa).

The protein belongs to the PTH2 family.

Its subcellular location is the cytoplasm. The enzyme catalyses an N-acyl-L-alpha-aminoacyl-tRNA + H2O = an N-acyl-L-amino acid + a tRNA + H(+). In terms of biological role, the natural substrate for this enzyme may be peptidyl-tRNAs which drop off the ribosome during protein synthesis. The chain is Peptidyl-tRNA hydrolase from Methanococcus vannielii (strain ATCC 35089 / DSM 1224 / JCM 13029 / OCM 148 / SB).